A 347-amino-acid chain; its full sequence is Merozoite surface protein 2 (347 aa).

The signal sequence occupies residues 1–20 (MKVIKTLSIINFFIFVTFNI). Asn-22 and Asn-36 each carry an N-linked (GlcNAc...) asparagine glycan. The polymorphic region stretch occupies residues 44–273 (AESKPPTGDG…EQTESPELQS (230 aa)). A run of 22 repeats spans residues 53 to 60 (GAVASAGN), 61 to 68 (GAVASAGN), 69 to 76 (GAVASAGN), 77 to 84 (GAVASAGN), 85 to 88 (GAGN), 89 to 92 (GAGN), 93 to 96 (GAGN), 97 to 100 (GAGN), 101 to 104 (GAGN), 105 to 108 (GAGN), 109 to 112 (GAGN), 113 to 116 (GAGN), 117 to 120 (GAGN), 121 to 124 (GAGN), 125 to 128 (GAGN), 129 to 132 (GAGN), 133 to 136 (GAGN), 137 to 140 (GAGN), 141 to 144 (GAGN), 145 to 152 (GAVASAGN), 153 to 156 (GAGN), and 157 to 164 (GAVASAGN). Residues 53–164 (GAVASAGNGA…GNGAVASAGN (112 aa)) are 6 X 8 AA repeats of G-A-V-A-S-A-G-N. A 16 X 4 AA repeats of G-A-G-N region spans residues 85–156 (GAGNGAGNGA…VASAGNGAGN (72 aa)). Low complexity predominate over residues 165 to 206 (GAVAERSSSTPATTTTTTTTNDAEASTSTSSENSNHNNAETN). A disordered region spans residues 165 to 308 (GAVAERSSST…DSQKECTDGN (144 aa)). Composition is skewed to polar residues over residues 213 to 240 (VQPNQANKETQNNSNVQQDSQTKSNVPR) and 247 to 275 (KSPTAQPEQAENSAPTAEQTESPELQSAP). Asn-224 carries N-linked (GlcNAc...) asparagine glycosylation. An N-linked (GlcNAc...) asparagine glycan is attached at Asn-296. Residues Cys-304 and Cys-312 are joined by a disulfide bond. N-linked (GlcNAc...) asparagine glycosylation is found at Asn-320 and Asn-321. Asn-321 carries GPI-anchor amidated asparagine lipidation. The propeptide at 322-347 (SSNIASINKFVVLISATLVLSFAIFI) is removed in mature form.

It localises to the cell membrane. May play a role in the merozoite attachment to the erythrocyte. This is Merozoite surface protein 2 from Plasmodium falciparum (isolate Nig32 / Nigeria).